A 146-amino-acid polypeptide reads, in one-letter code: Keratin-associated protein 12-2 (146 aa).

A run of 23 repeats spans residues 10 to 14 (CQPAC), 15 to 19 (CAPSP), 20 to 24 (CQPAC), 25 to 29 (CVPSS), 34 to 38 (CCVPV), 40 to 44 (CQSSV), 45 to 49 (CVPVS), 55 to 59 (CLPVS), 60 to 64 (CQSSV), 65 to 69 (CVPMS), 70 to 74 (FKSAV), 75 to 79 (CVPVS), 80 to 84 (CQSSV), 85 to 89 (CVPVS), 90 to 94 (CRPIV), 95 to 99 (CAAPS), 100 to 104 (CQSSL), 105 to 109 (CVPVS), 110 to 114 (CRPVV), 120 to 124 (CQSSG), 125 to 129 (CCQPS), 130 to 134 (CTSVL), and 135 to 139 (CRPIS). Residues 10–139 (CQPACCAPSP…CTSVLCRPIS (130 aa)) are 23 X 5 AA approximate repeats.

It belongs to the KRTAP type 12 family. Interacts with hair keratins. As to expression, restricted to a narrow region of the hair fiber cuticle, lying approximately 20 cell layers above the apex of the dermal papilla of the hair root; not detected in any other tissues.

Functionally, in the hair cortex, hair keratin intermediate filaments are embedded in an interfilamentous matrix, consisting of hair keratin-associated proteins (KRTAP), which are essential for the formation of a rigid and resistant hair shaft through their extensive disulfide bond cross-linking with abundant cysteine residues of hair keratins. The matrix proteins include the high-sulfur and high-glycine-tyrosine keratins. This Homo sapiens (Human) protein is Keratin-associated protein 12-2 (KRTAP12-2).